The sequence spans 465 residues: Cysteine--tRNA ligase (465 aa).

Cys28 contributes to the Zn(2+) binding site. The short motif at 30–40 (PTVYNYIHVGN) is the 'HIGH' region element. Cys208, His233, and Glu237 together coordinate Zn(2+). Positions 265 to 269 (KMSKS) match the 'KMSKS' region motif. Lys268 lines the ATP pocket.

This sequence belongs to the class-I aminoacyl-tRNA synthetase family. Monomer. Zn(2+) is required as a cofactor.

It is found in the cytoplasm. The enzyme catalyses tRNA(Cys) + L-cysteine + ATP = L-cysteinyl-tRNA(Cys) + AMP + diphosphate. This chain is Cysteine--tRNA ligase, found in Exiguobacterium sp. (strain ATCC BAA-1283 / AT1b).